A 157-amino-acid chain; its full sequence is SUMO-conjugating enzyme UBC9-B (157 aa).

Residues I4–P157 form the UBC core domain. Positions R13–K18 are interaction with SUMO1. The active-site Glycyl thioester intermediate is C93.

Belongs to the ubiquitin-conjugating enzyme family. As to quaternary structure, forms a tight complex with rangap1 and ranbp2. Interacts with vsx1.

It localises to the nucleus. It functions in the pathway protein modification; protein sumoylation. Functionally, accepts the ubiquitin-like proteins sumo1, sumo2 and sumo3 from the uble1a-uble1b E1 complex and catalyzes their covalent attachment to other proteins with the help of an E3 ligase such as ranbp2 or cbx4. Essential for nuclear architecture and chromosome segregation. Mediates nuclear localization of vsx1. Required for progression through mitosis during organogenesis. The sequence is that of SUMO-conjugating enzyme UBC9-B (ube2ib) from Danio rerio (Zebrafish).